A 315-amino-acid polypeptide reads, in one-letter code: WD repeat domain-containing protein 83 (315 aa).

WD repeat units follow at residues 23–62, 65–104, 107–146, 151–188, 190–228, 231–272, and 275–313; these read CGQGAVRAVRFNVDGNYCLTCGSDKTLKLWNPLRGTLLRT, GHGYEVLDAAGSFDNSHLCSGGGDKTVVLWDVATGQVVRK, GHAGKVNTVQFNEEATVILSGSIDSSVRCWDCRSRKPEPV, EARDGISSVKVSDHEILAGSVDGRVRRYDLRMGQVTSD, VGSPITCTCFSRDGQCTLISSLDSTLRLLDKDTGELLGE, GHKN…LALA, and VGSNVVQSLAYHPADPCLLTAMGGSIQYWREETYEAEGG.

Belongs to the WD repeat MORG1 family. Interacts with EGLN3/PHD3. Interacts with ERK signaling proteins MAP2K1/MEK1, MAP2K2/MEK2, LAMTOR3, ARAF/Raf-1, MAPK1/ERK2 and MAPK3/ERK1. Identified in the spliceosome C complex. Interacts with PARD6B and CRB3. Interacts strongly with GTP-bound RRAGA but not with inactive GDP-bound. Interacts with p62/SQSTM1. Highly expressed in testis and brain. Expressed at intermediate level in heart, liver and kidney. Weakly expressed in spleen and lung and absent in muscle.

It localises to the cytoplasm. It is found in the lysosome. The protein localises to the nucleus. Functionally, molecular scaffold protein for various multimeric protein complexes. Acts as a module in the assembly of a multicomponent scaffold for the ERK pathway, linking ERK responses to specific agonists. At low concentrations it enhances ERK activation, whereas high concentrations lead to the inhibition of ERK activation. Also involved in response to hypoxia by acting as a negative regulator of HIF1A/HIF-1-alpha via its interaction with EGLN3/PHD3. May promote degradation of HIF1A. May act by recruiting signaling complexes to a specific upstream activator. May also be involved in pre-mRNA splicing. Participates in tight junction development by regulating apico-basal polarity, a key step in tissue development and organization. Mechanistically, regulates the translocation of PAR6-aPKC from the cytoplasm to the apical surface by acting as an adapter between PARD6B AND CRB3. Also acts as a negative regulator of mTORC1 under nutrient-rich conditions by binding to the active Rag GTPases to inhibit mTORC1 localization to the lysosome and phosphorylation of downstream targets. This facilitates constitutive basal autophagy during nutrient availability. This chain is WD repeat domain-containing protein 83 (Wdr83), found in Rattus norvegicus (Rat).